The chain runs to 262 residues: Abhydrolase domain-containing protein ACTT2 (262 aa).

A Peroxisomal targeting signal type 1 motif is present at residues 260–262 (SKL).

The protein belongs to the AB hydrolase superfamily. AKT2 hydrolase family.

Its subcellular location is the peroxisome. It participates in mycotoxin biosynthesis. Abhydrolase domain-containing protein; part of the gene clusters that mediate the biosynthesis of the host-selective toxins (HSTs) ACT-toxins responsible for brown spot of tangerine disease by the tangerine pathotype which affects tangerines and mandarins. ACT-toxins consist of three moieties, 9,10-epoxy-8-hydroxy-9-methyl-decatrienoic acid (EDA), valine and a polyketide. ACT-toxin I is toxic to both citrus and pear; toxin II the 5''-deoxy derivative of ACT-toxin I, is highly toxic to pear and slightly toxic to citrus. On cellular level, ACT-toxins affect plasma membrane of susceptible cells and cause a sudden increase in loss of K(+) after a few minutes of toxin treatment. The acyl-CoA ligase ACTT1, the hydrolase ACTT2, the enoyl-CoA hydratases ACTT3 and ACTT6, and the acyl-CoA synthetase ACTT5 are all involved in the biosynthesis of the AK-, AF- and ACT-toxin common 9,10-epoxy-8-hydroxy-9-methyl-decatrienoic acid (EDA) structural moiety. The exact role of each enzyme, and of additional enzymes identified within the AF-toxin clusters have still to be determined. On the other hand, ACTTS1 to ACTTS4 are specific to the tangerine pathotype. The function of ACTTS3 is to elongate the polyketide chain portion of ACT-toxin that is unique to this toxin. The enoyl-reductase ACTTS2 might complement the missing enoyl-reductase (ER) domain in ACTTS3 in the synthesis of the polyketide portion of ACT-toxin. The roles of the nonribosomal peptide synthetases-related proteins ACTTS1 and ACTTS4 have also still not been elucidated. The polypeptide is Abhydrolase domain-containing protein ACTT2 (Alternaria alternata (Alternaria rot fungus)).